The following is a 142-amino-acid chain: Large ribosomal subunit protein uL11 (142 aa).

The protein belongs to the universal ribosomal protein uL11 family. Part of the ribosomal stalk of the 50S ribosomal subunit. Interacts with L10 and the large rRNA to form the base of the stalk. L10 forms an elongated spine to which L12 dimers bind in a sequential fashion forming a multimeric L10(L12)X complex. Post-translationally, one or more lysine residues are methylated.

Forms part of the ribosomal stalk which helps the ribosome interact with GTP-bound translation factors. This is Large ribosomal subunit protein uL11 from Edwardsiella ictaluri (strain 93-146).